Consider the following 143-residue polypeptide: Large ribosomal subunit protein uL15 (143 aa).

Composition is skewed to basic residues over residues 1 to 13 and 23 to 38; these read MIRK…KMRG and KKHR…GNAG. Residues 1–38 are disordered; it reads MIRKSKKITKMRGSRTCGYGEAKKHRGAGHRGGRGNAG.

The protein belongs to the universal ribosomal protein uL15 family. In terms of assembly, part of the 50S ribosomal subunit.

Its function is as follows. Binds to the 23S rRNA. The protein is Large ribosomal subunit protein uL15 of Methanococcus maripaludis (strain C7 / ATCC BAA-1331).